A 780-amino-acid polypeptide reads, in one-letter code: Striatin (780 aa).

A coiled-coil region spans residues 53-120 (LHFLQHEWAR…QERAKYHKLK (68 aa)). The tract at residues 55–63 (FLQHEWARF) is caveolin-binding. A disordered region spans residues 124 to 145 (ELNQGDMKPPSYDSDEGNETEV). The residue at position 137 (S137) is a Phosphoserine. Positions 149–166 (QNSQFMWKQGRQLLRQYL) are calmodulin-binding. T225 carries the phosphothreonine modification. Phosphoserine occurs at positions 227, 229, 245, and 259. Disordered stretches follow at residues 290–321 (FLVA…TPER), 334–353 (EQYK…NRSK), and 363–388 (DVDE…LPEQ). The segment covering 299–315 (NESRSAGDGTDWEKEDQ) has biased composition (basic and acidic residues). Residues 338–351 (KERKGKKGVKRPNR) are compositionally biased toward basic residues. WD repeat units follow at residues 461–500 (SHFD…PAKK), 514–553 (AHKG…VDPY), 567–606 (GHTD…PALT), 662–701 (SSSC…LIHS), 704–743 (AHLE…CIQE), and 750–780 (KFEE…KVFV).

This sequence belongs to the WD repeat striatin family. Part of the core of STRIPAK complexes composed of PP2A catalytic and scaffolding subunits, the striatins (PP2A regulatory subunits), the striatin-associated proteins MOB4, STRIP1 and STRIP2, PDCD10 and members of the STE20 kinases, such as STK24 and STK26. Interacts with CTTNBP2; this interaction may regulate dendritic spine distribution of STRN. Activation of glutamate receptors weakens the interaction with CTTNBP2. As to expression, mainly expressed in the central nervous system. Mostly confined in dendrites, not in axons, and is most abundant in dendritic spines.

The protein localises to the cytoplasm. It localises to the membrane. The protein resides in the cell projection. It is found in the dendritic spine. Calmodulin-binding scaffolding protein which is the center of the striatin-interacting phosphatase and kinase (STRIPAK) complexes. STRIPAK complexes have critical roles in protein (de)phosphorylation and are regulators of multiple signaling pathways including Hippo, MAPK, nuclear receptor and cytoskeleton remodeling. Different types of STRIPAK complexes are involved in a variety of biological processes such as cell growth, differentiation, apoptosis, metabolism and immune regulation. This Rattus norvegicus (Rat) protein is Striatin (Strn).